Here is an 826-residue protein sequence, read N- to C-terminus: Protein lozenge (826 aa).

Disordered regions lie at residues 1 to 45 (MHLH…ASQT), 87 to 171 (PVSV…WSSS), and 214 to 263 (ASVG…NNNN). A compositionally biased stretch (pro residues) spans 12–24 (PPSPSPNPTPTPS). Over residues 106-141 (SHHHHHLHHHYSPYHHAHPYHPPHPHAPHHHHHHHP) the composition is skewed to basic residues. Positions 142-153 (PYPYPPAGPHPP) are enriched in pro residues. Polar residues predominate over residues 156-171 (VTSSSTSPTGNGWSSS). In terms of domain architecture, Runt spans 275–403 (LVQKRQQEHP…TVDGPREPRS (129 aa)). Low complexity predominate over residues 774–798 (QQQQQQQQQQQQVHHPQQQQVESAG). The disordered stretch occupies residues 774-826 (QQQQQQQQQQQQVHHPQQQQVESAGEVGGSGAGGVESAREEDVGDLSQVWRPY).

Expressed in the pupal eye during programmed cell death.

It localises to the nucleus. Its function is as follows. Involved in prepatterning photoreceptor precursors in the developing eye; in the larval eye disk it defines a subset of cells as an equipotential group that is competent to respond to the sevenless developmental signal and another subset that confer proper photoreceptor identity by positively regulating the homeo box gene Bar. Involved in the aop/pnt dynamic in a Ras-dependent manner to regulate pros expression. Promotes apoptosis in the pupal eye by directly activating aos and klu. Also modulates hid- and rpr-mediated cell death. Regulates amos function in olfactory sensilla development. The chain is Protein lozenge (lz) from Drosophila melanogaster (Fruit fly).